We begin with the raw amino-acid sequence, 435 residues long: Gamma-glutamyl phosphate reductase (435 aa).

Belongs to the gamma-glutamyl phosphate reductase family.

Its subcellular location is the cytoplasm. The catalysed reaction is L-glutamate 5-semialdehyde + phosphate + NADP(+) = L-glutamyl 5-phosphate + NADPH + H(+). Its pathway is amino-acid biosynthesis; L-proline biosynthesis; L-glutamate 5-semialdehyde from L-glutamate: step 2/2. Catalyzes the NADPH-dependent reduction of L-glutamate 5-phosphate into L-glutamate 5-semialdehyde and phosphate. The product spontaneously undergoes cyclization to form 1-pyrroline-5-carboxylate. The chain is Gamma-glutamyl phosphate reductase from Parasynechococcus marenigrum (strain WH8102).